The following is a 291-amino-acid chain: Phosphoribosylaminoimidazole-succinocarboxamide synthase (291 aa).

Belongs to the SAICAR synthetase family.

The catalysed reaction is 5-amino-1-(5-phospho-D-ribosyl)imidazole-4-carboxylate + L-aspartate + ATP = (2S)-2-[5-amino-1-(5-phospho-beta-D-ribosyl)imidazole-4-carboxamido]succinate + ADP + phosphate + 2 H(+). It functions in the pathway purine metabolism; IMP biosynthesis via de novo pathway; 5-amino-1-(5-phospho-D-ribosyl)imidazole-4-carboxamide from 5-amino-1-(5-phospho-D-ribosyl)imidazole-4-carboxylate: step 1/2. The sequence is that of Phosphoribosylaminoimidazole-succinocarboxamide synthase (ADE1) from Candida albicans (Yeast).